Here is a 425-residue protein sequence, read N- to C-terminus: Serine--tRNA ligase (425 aa).

231 to 233 provides a ligand contact to L-serine; the sequence is TAE. Residue 262 to 264 participates in ATP binding; sequence RSE. Residue glutamate 285 participates in L-serine binding. 349-352 is a binding site for ATP; the sequence is EISS. An L-serine-binding site is contributed by serine 385.

It belongs to the class-II aminoacyl-tRNA synthetase family. Type-1 seryl-tRNA synthetase subfamily. As to quaternary structure, homodimer. The tRNA molecule binds across the dimer.

Its subcellular location is the cytoplasm. It carries out the reaction tRNA(Ser) + L-serine + ATP = L-seryl-tRNA(Ser) + AMP + diphosphate + H(+). The enzyme catalyses tRNA(Sec) + L-serine + ATP = L-seryl-tRNA(Sec) + AMP + diphosphate + H(+). It functions in the pathway aminoacyl-tRNA biosynthesis; selenocysteinyl-tRNA(Sec) biosynthesis; L-seryl-tRNA(Sec) from L-serine and tRNA(Sec): step 1/1. In terms of biological role, catalyzes the attachment of serine to tRNA(Ser). Is also able to aminoacylate tRNA(Sec) with serine, to form the misacylated tRNA L-seryl-tRNA(Sec), which will be further converted into selenocysteinyl-tRNA(Sec). In Bacillus velezensis (strain DSM 23117 / BGSC 10A6 / LMG 26770 / FZB42) (Bacillus amyloliquefaciens subsp. plantarum), this protein is Serine--tRNA ligase.